The primary structure comprises 457 residues: UDP-N-acetylmuramoylalanine--D-glutamate ligase (457 aa).

Residue 116–122 (GTNGKTT) participates in ATP binding.

Belongs to the MurCDEF family.

The protein localises to the cytoplasm. It catalyses the reaction UDP-N-acetyl-alpha-D-muramoyl-L-alanine + D-glutamate + ATP = UDP-N-acetyl-alpha-D-muramoyl-L-alanyl-D-glutamate + ADP + phosphate + H(+). It functions in the pathway cell wall biogenesis; peptidoglycan biosynthesis. Its function is as follows. Cell wall formation. Catalyzes the addition of glutamate to the nucleotide precursor UDP-N-acetylmuramoyl-L-alanine (UMA). The polypeptide is UDP-N-acetylmuramoylalanine--D-glutamate ligase (Caldicellulosiruptor bescii (strain ATCC BAA-1888 / DSM 6725 / KCTC 15123 / Z-1320) (Anaerocellum thermophilum)).